The following is a 231-amino-acid chain: Ribose-5-phosphate isomerase A (231 aa).

Residues 40-43, 93-96, and 106-109 contribute to the substrate site; these read TGST, DGAD, and KGGG. E115 functions as the Proton acceptor in the catalytic mechanism. K133 serves as a coordination point for substrate.

Belongs to the ribose 5-phosphate isomerase family. Homodimer.

The catalysed reaction is aldehydo-D-ribose 5-phosphate = D-ribulose 5-phosphate. It functions in the pathway carbohydrate degradation; pentose phosphate pathway; D-ribose 5-phosphate from D-ribulose 5-phosphate (non-oxidative stage): step 1/1. Catalyzes the reversible conversion of ribose-5-phosphate to ribulose 5-phosphate. The chain is Ribose-5-phosphate isomerase A from Escherichia coli O1:K1 / APEC.